We begin with the raw amino-acid sequence, 152 residues long: Ribosome maturation factor RimP (152 aa).

This sequence belongs to the RimP family.

The protein resides in the cytoplasm. Required for maturation of 30S ribosomal subunits. The protein is Ribosome maturation factor RimP of Salmonella arizonae (strain ATCC BAA-731 / CDC346-86 / RSK2980).